The chain runs to 103 residues: Small ribosomal subunit protein cS23 (103 aa).

It belongs to the chloroplast-specific ribosomal protein cS23 family. Part of the 30S ribosomal subunit.

Its subcellular location is the plastid. It is found in the chloroplast. Its function is as follows. Probably a ribosomal protein or a ribosome-associated protein. In Euglena granulata, this protein is Small ribosomal subunit protein cS23 (ycf65).